The following is a 1158-amino-acid chain: Hephaestin (1158 aa).

The signal sequence occupies residues 1–23 (MESGHLLWALLFMQSLWPQLTDG). 6 consecutive Plastocyanin-like domains span residues 24–206 (ATRV…LITC), 218–366 (QRQD…VKSC), 370–560 (PPVD…LLVC), 570–718 (KQKG…VSQC), 731–903 (AARI…LAIC), and 911–1067 (HGGR…SRTE). Residues 24 to 1110 (ATRVYYLGIR…PIKNVEMLAS (1087 aa)) are Extracellular-facing. Gly70 and Tyr73 together coordinate Na(+). Positions 126 and 128 each coordinate Cu(2+). Position 126 (His126) interacts with O2. Ca(2+)-binding residues include Lys134, Asp152, and Asp153. Asn164 is a glycosylation site (N-linked (GlcNAc...) asparagine). Cys180 and Cys206 are joined by a disulfide. His186 and His188 together coordinate Cu(2+). Residue His186 coordinates O2. N-linked (GlcNAc...) asparagine glycosylation is present at Asn236. Ser265 contributes to the Na(+) binding site. Cys285 and Cys366 form a disulfide bridge. Positions 304, 347, and 352 each coordinate Cu(2+). The Na(+) site is built by Phe416, Gly425, and Tyr428. The cysteines at positions 534 and 560 are disulfide-linked. A glycan (N-linked (GlcNAc...) asparagine) is linked at Asn588. Residue Ser617 coordinates Na(+). A disulfide bridge links Cys637 with Cys718. Residues His656, Cys699, His704, and Met709 each coordinate Cu(2+). N-linked (GlcNAc...) asparagine glycans are attached at residues Asn714 and Asn758. Phe769 and Gly778 together coordinate Na(+). Asn829 and Asn873 each carry an N-linked (GlcNAc...) asparagine glycan. Cys877 and Cys903 are oxidised to a cystine. Asn931 carries N-linked (GlcNAc...) asparagine glycosylation. The Cu(2+) site is built by His1000, His1003, His1005, His1045, Cys1046, His1047, His1051, and Met1056. O2-binding residues include His1003 and His1005. Residue His1047 participates in O2 binding. The helical transmembrane segment at 1111–1131 (VLVAISVTLLLVVLALGGVVW) threads the bilayer. Over 1132-1158 (YQHRQRKLRRNRRSILDDSFKLLSFKQ) the chain is Cytoplasmic. Residues Ser1145, Ser1150, and Ser1155 each carry the phosphoserine modification.

The protein belongs to the multicopper oxidase family. As to quaternary structure, part of a complex composed of SLC40A1/ferroportin, TF/transferrin and HEPH/hephaestin that transfers iron from cells to transferrin. The cofactor is Cu cation. As to expression, expressed by intestinal absorptive cells (at protein level). Also detected in breast, colon, bone trabecular cells and fibroblasts.

It localises to the basolateral cell membrane. It carries out the reaction 4 Fe(2+) + O2 + 4 H(+) = 4 Fe(3+) + 2 H2O. Functionally, plasma membrane ferroxidase that mediates the extracellular conversion of ferrous/Fe(2+) iron into its ferric/Fe(3+) form. Couples ferroportin which specifically exports ferrous/Fe(2+) iron from cells to transferrin that only binds and shuttles extracellular ferric/Fe(3+) iron throughout the body. By helping iron transfer from cells to blood mainly contributes to dietary iron absorption by the intestinal epithelium and more generally regulates iron levels in the body. The sequence is that of Hephaestin from Homo sapiens (Human).